The sequence spans 1172 residues: Serine/threonine-protein kinase Nek10 (1172 aa).

An ARM repeat occupies 209 to 251; it reads GAHKTLVNLLGARDTNVLLGSLLALASLAESQECREKISELNI. Residues 481 to 514 are a coiled coil; the sequence is YEELVSKLNLLVEDELKQIAENIESINQNKAPLK. The Protein kinase domain maps to 519-712; that stretch reads YAILDHLGSG…SEPYGEKADV (194 aa). ATP is bound by residues 525–533 and Lys-548; that span reads LGSGAFGCV. The active-site Proton acceptor is Asp-655. 2 disordered regions span residues 855–875 and 898–954; these read SELS…YGKD and TYSE…GSRP. Residues 919–945 show a composition bias toward polar residues; the sequence is PLKESTFNILKRSFSASGGERQSQTRD.

It belongs to the protein kinase superfamily. NEK Ser/Thr protein kinase family. NIMA subfamily. In terms of assembly, interacts with RAF1 and MAP2K1; the interaction is direct with RAF1 and required for ERK1/2-signaling pathway activation in response to UV irradiation. Requires Mg(2+) as cofactor. In terms of tissue distribution, expressed in the lung.

The enzyme catalyses L-seryl-[protein] + ATP = O-phospho-L-seryl-[protein] + ADP + H(+). The catalysed reaction is L-threonyl-[protein] + ATP = O-phospho-L-threonyl-[protein] + ADP + H(+). Functionally, plays a role in the cellular response to UV irradiation. Mediates G2/M cell cycle arrest, MEK autoactivation and ERK1/2-signaling pathway activation in response to UV irradiation. In ciliated cells of airways, it is involved in the regulation of mucociliary transport. In Homo sapiens (Human), this protein is Serine/threonine-protein kinase Nek10.